Here is a 184-residue protein sequence, read N- to C-terminus: Protein PLANT CADMIUM RESISTANCE 5 (184 aa).

Residues 1-26 (MGRPVGQTNQAQPSVQHTASPSNKVS) are compositionally biased toward polar residues. The tract at residues 1-33 (MGRPVGQTNQAQPSVQHTASPSNKVSHNGGIGK) is disordered. A helical membrane pass occupies residues 94–114 (AGLLYGALFFTGASFVYSYMF).

Belongs to the cornifelin family.

It localises to the membrane. In terms of biological role, may be involved in heavy metals transport. This chain is Protein PLANT CADMIUM RESISTANCE 5 (PCR5), found in Arabidopsis thaliana (Mouse-ear cress).